Here is a 114-residue protein sequence, read N- to C-terminus: Cytochrome c oxidase subunit 4B (114 aa).

3 helical membrane-spanning segments follow: residues 29-49 (QIVV…AVAT), 56-76 (FAIP…LFFF), and 89-109 (AFMI…MLLL).

Belongs to the cytochrome c oxidase bacterial subunit 4 family.

Its subcellular location is the cell membrane. The catalysed reaction is 4 Fe(II)-[cytochrome c] + O2 + 8 H(+)(in) = 4 Fe(III)-[cytochrome c] + 2 H2O + 4 H(+)(out). The protein is Cytochrome c oxidase subunit 4B (ctaF) of Alkalihalophilus pseudofirmus (strain ATCC BAA-2126 / JCM 17055 / OF4) (Bacillus pseudofirmus).